Reading from the N-terminus, the 481-residue chain is UDP-N-acetylmuramoyl-L-alanyl-D-glutamate--L-lysine ligase (481 aa).

Serine 42 contacts UDP-N-acetyl-alpha-D-muramoyl-L-alanyl-D-glutamate. 118-124 (GTKGKTT) lines the ATP pocket. Residues glutamine 158, 160–161 (TT), serine 187, and arginine 195 each bind UDP-N-acetyl-alpha-D-muramoyl-L-alanyl-D-glutamate. N6-carboxylysine is present on lysine 229. The L-lysine recognition motif motif lies at 404 to 407 (DDPN).

It belongs to the MurCDEF family. MurE subfamily. Carboxylation is probably crucial for Mg(2+) binding and, consequently, for the gamma-phosphate positioning of ATP.

The protein resides in the cytoplasm. The enzyme catalyses UDP-N-acetyl-alpha-D-muramoyl-L-alanyl-D-glutamate + L-lysine + ATP = UDP-N-acetyl-alpha-D-muramoyl-L-alanyl-gamma-D-glutamyl-L-lysine + ADP + phosphate + H(+). It participates in cell wall biogenesis; peptidoglycan biosynthesis. Functionally, catalyzes the addition of L-lysine to the nucleotide precursor UDP-N-acetylmuramoyl-L-alanyl-D-glutamate (UMAG) in the biosynthesis of bacterial cell-wall peptidoglycan. The polypeptide is UDP-N-acetylmuramoyl-L-alanyl-D-glutamate--L-lysine ligase (Streptococcus pyogenes serotype M18 (strain MGAS8232)).